The sequence spans 123 residues: Large ribosomal subunit protein uL14 (123 aa).

It belongs to the universal ribosomal protein uL14 family. In terms of assembly, part of the 50S ribosomal subunit. Forms a cluster with proteins L3 and L19. In the 70S ribosome, L14 and L19 interact and together make contacts with the 16S rRNA in bridges B5 and B8.

Its function is as follows. Binds to 23S rRNA. Forms part of two intersubunit bridges in the 70S ribosome. The chain is Large ribosomal subunit protein uL14 from Corynebacterium jeikeium (strain K411).